The sequence spans 302 residues: HTH-type transcriptional regulator AbgR (302 aa).

The region spanning 5–62 (VKIHQIRAFVEVARQGSIRGASRMLNMSQPALSKSIQELEEGLAAQLFFRRSKGVTLT) is the HTH lysR-type domain. The H-T-H motif DNA-binding region spans 22 to 41 (IRGASRMLNMSQPALSKSIQ).

The protein belongs to the LysR transcriptional regulatory family.

Could be the regulator of the abg operon. The polypeptide is HTH-type transcriptional regulator AbgR (abgR) (Escherichia coli (strain K12)).